The chain runs to 200 residues: Transcription elongation factor A protein-like 5 (200 aa).

5 stretches are compositionally biased toward basic and acidic residues: residues 1-49 (MEKF…KLEV), 61-85 (GEGK…KPDS), 94-106 (RAAE…DYVP), 114-153 (DRGT…EELR), and 190-200 (GQKDLEDAPFV). The tract at residues 1–200 (MEKFYKENEG…QKDLEDAPFV (200 aa)) is disordered.

The protein belongs to the TFS-II family. TFA subfamily.

It localises to the nucleus. In terms of biological role, may be involved in transcriptional regulation. The protein is Transcription elongation factor A protein-like 5 (Tceal5) of Mus musculus (Mouse).